Consider the following 417-residue polypeptide: V-set and immunoglobulin domain-containing protein 8 (417 aa).

The N-terminal stretch at 1–21 (MGVRGALHLLLVCLSPALLSA) is a signal peptide. 2 Ig-like V-type domains span residues 22–140 (VRIN…VIVT) and 145–256 (PAVP…VKVS). The Extracellular portion of the chain corresponds to 22 to 262 (VRINGDGQEV…VKVSDSQRVG (241 aa)). 2 disulfides stabilise this stretch: cysteine 44-cysteine 125 and cysteine 166-cysteine 238. The chain crosses the membrane as a helical span at residues 263-283 (MIVGAVLGSLLMLACLALGIW). The Cytoplasmic segment spans residues 284–417 (GLICCCCGGG…QRSCKDGLLV (134 aa)).

The protein localises to the membrane. The sequence is that of V-set and immunoglobulin domain-containing protein 8 (Vsig8) from Mus musculus (Mouse).